The primary structure comprises 146 residues: Heat-stable 19 kDa antigen (146 aa).

Positions Met-1–Ala-20 are cleaved as a signal peptide.

Belongs to the cerato-platanin family. Post-translationally, glycosylated.

The protein resides in the secreted. This is Heat-stable 19 kDa antigen (CSA) from Coccidioides posadasii (strain C735) (Valley fever fungus).